Here is a 323-residue protein sequence, read N- to C-terminus: Elongation factor P--(R)-beta-lysine ligase (323 aa).

74–76 (SPE) is a substrate binding site. ATP is bound by residues 98–100 (RNE) and N107. Y116 lines the substrate pocket. 242 to 243 (EL) contacts ATP. E249 is a binding site for substrate. ATP is bound at residue G298.

Belongs to the class-II aminoacyl-tRNA synthetase family. EpmA subfamily. As to quaternary structure, homodimer.

The enzyme catalyses D-beta-lysine + L-lysyl-[protein] + ATP = N(6)-((3R)-3,6-diaminohexanoyl)-L-lysyl-[protein] + AMP + diphosphate + H(+). Its function is as follows. With EpmB is involved in the beta-lysylation step of the post-translational modification of translation elongation factor P (EF-P). Catalyzes the ATP-dependent activation of (R)-beta-lysine produced by EpmB, forming a lysyl-adenylate, from which the beta-lysyl moiety is then transferred to the epsilon-amino group of a conserved specific lysine residue in EF-P. This is Elongation factor P--(R)-beta-lysine ligase from Photobacterium profundum (strain SS9).